The sequence spans 306 residues: D-alanine--D-alanine ligase (306 aa).

One can recognise an ATP-grasp domain in the interval 102-300 (KIVVASVGVS…YGDIVQWMVE (199 aa)). Residue 128-183 (PMEPPYVIKPVCEGSSLGVIIVKENESVPSLNVVGSEWVYADTVIVEKYIPGRELT) coordinates ATP. Mg(2+)-binding residues include Asp-253, Glu-267, and Asn-269.

This sequence belongs to the D-alanine--D-alanine ligase family. It depends on Mg(2+) as a cofactor. Mn(2+) serves as cofactor.

The protein localises to the cytoplasm. The enzyme catalyses 2 D-alanine + ATP = D-alanyl-D-alanine + ADP + phosphate + H(+). The protein operates within cell wall biogenesis; peptidoglycan biosynthesis. Cell wall formation. The protein is D-alanine--D-alanine ligase of Bartonella henselae (strain ATCC 49882 / DSM 28221 / CCUG 30454 / Houston 1) (Rochalimaea henselae).